The chain runs to 346 residues: Putative serine/threonine-protein kinase K06H7.1 (346 aa).

The 268-residue stretch at 20–287 (YKVVQKLGEG…KLFKLLEDVM (268 aa)) folds into the Protein kinase domain. Residues 26 to 34 (LGEGGCGSV) and lysine 50 each bind ATP. Aspartate 141 functions as the Proton acceptor in the catalytic mechanism. Residues 302–326 (PEKKKNPASQGNKFGLGKKGTKESG) form a disordered region.

This sequence belongs to the protein kinase superfamily. Ser/Thr protein kinase family.

The catalysed reaction is L-seryl-[protein] + ATP = O-phospho-L-seryl-[protein] + ADP + H(+). The enzyme catalyses L-threonyl-[protein] + ATP = O-phospho-L-threonyl-[protein] + ADP + H(+). This chain is Putative serine/threonine-protein kinase K06H7.1, found in Caenorhabditis elegans.